The chain runs to 223 residues: Ribonuclease S-2 (223 aa).

The signal sequence occupies residues 1–22; that stretch reads MAKSQLVSALFVFFFSLSPIYG. A disulfide bridge links Cys-38 with Cys-44. Asn-51 carries N-linked (GlcNAc...) asparagine glycosylation. His-55 acts as the Proton donor in catalysis. Residues His-55 and 94-95 each bind RNA; that span reads QL. 3 disulfide bridges follow: Cys-71/Cys-119, Cys-178/Cys-211, and Cys-194/Cys-205. Residue Gln-112 is part of the active site. Residue 115 to 116 participates in RNA binding; that stretch reads KH. Catalysis depends on His-116, which acts as the Proton acceptor.

This sequence belongs to the RNase T2 family. As to expression, pistil.

The protein resides in the secreted. Its subcellular location is the extracellular space. The catalysed reaction is a ribonucleotidyl-ribonucleotide-RNA + H2O = a 3'-end 3'-phospho-ribonucleotide-RNA + a 5'-end dephospho-ribonucleoside-RNA + H(+). Functionally, self-incompatibility (SI) is the inherited ability of a flowering plant to prevent self-fertilization by discriminating between self and non-self pollen during pollination. In many species of the Solanaceae, self-incompatibility is controlled by the single, multiallelic locus S. This stylar glycoprotein is associated with expression of self-incompatibility in potato. This chain is Ribonuclease S-2, found in Solanum tuberosum (Potato).